Here is a 112-residue protein sequence, read N- to C-terminus: Nucleoid-associated protein RER_03900 (112 aa).

The protein belongs to the YbaB/EbfC family. Homodimer.

Its subcellular location is the cytoplasm. The protein resides in the nucleoid. Binds to DNA and alters its conformation. May be involved in regulation of gene expression, nucleoid organization and DNA protection. This Rhodococcus erythropolis (strain PR4 / NBRC 100887) protein is Nucleoid-associated protein RER_03900.